The following is a 101-amino-acid chain: uncharacterized protein (101 aa).

Helical transmembrane passes span 20-40 (KHFI…LLGL), 59-79 (GVIA…MYIA), and 81-101 (SEMW…ALFF).

Its subcellular location is the endoplasmic reticulum. It is found in the membrane. This is an uncharacterized protein from Saccharomyces cerevisiae (strain ATCC 204508 / S288c) (Baker's yeast).